Reading from the N-terminus, the 310-residue chain is Carbamate kinase 1 (310 aa).

This sequence belongs to the carbamate kinase family.

The protein localises to the cytoplasm. It carries out the reaction hydrogencarbonate + NH4(+) + ATP = carbamoyl phosphate + ADP + H2O + H(+). The protein operates within metabolic intermediate metabolism; carbamoyl phosphate degradation; CO(2) and NH(3) from carbamoyl phosphate: step 1/1. The chain is Carbamate kinase 1 (arcC1) from Staphylococcus aureus (strain COL).